Consider the following 330-residue polypeptide: Aquaporin Lacbi1:307192 (330 aa).

Over Met-1–Glu-40 the chain is Cytoplasmic. Residues Ala-41–Gly-61 traverse the membrane as a helical segment. At Asn-62–Ser-71 the chain is on the extracellular side. A helical transmembrane segment spans residues Val-72–Ala-92. Residues Thr-93–Gln-124 lie on the Cytoplasmic side of the membrane. Residues Asn-99–Cys-101 carry the NPA 1 motif. A helical transmembrane segment spans residues Ile-125–Glu-145. The Extracellular portion of the chain corresponds to Ser-146 to Glu-157. Residues Thr-158 to Ala-178 form a helical membrane-spanning segment. The Cytoplasmic portion of the chain corresponds to Gln-179 to Arg-183. A helical transmembrane segment spans residues Ala-184–Asp-204. Residues Pro-205 to Ser-207 lie on the Extracellular side of the membrane. Residues Phe-208–Trp-228 form a helical membrane-spanning segment. Topologically, residues Gly-229–Ala-264 are cytoplasmic. The NPA 2 motif lies at Asn-238 to Ala-240. A helical membrane pass occupies residues Ile-265–Leu-285. Topologically, residues Val-286–Val-330 are extracellular. Residues Arg-308–Val-330 form a disordered region. A compositionally biased stretch (basic and acidic residues) spans Gln-312–Val-330.

It belongs to the MIP/aquaporin (TC 1.A.8) family.

Its subcellular location is the membrane. Water channel-like protein that does not show transport of water nor ammonium across membranes. In Laccaria bicolor (strain S238N-H82 / ATCC MYA-4686) (Bicoloured deceiver), this protein is Aquaporin Lacbi1:307192.